The chain runs to 986 residues: MSFPLAHVDATLNQLAKQLIAHFPEQYQDQIFQHIATDKEKPTSNIGQLRYAIAMSDFFAETLQKQPHFLHQCWQQCPRLQDCEQYAERLTPLLAQVENEEQLYKVLRQFRHREMAKLSFCQSLNLGSVEDIFIRLSQLAESVIIGARDWLYQRACAEMGTPVDEQGTPLQLYILGMGKLGGFELNFSSDIDLIFTYASNGETVGARRSIDNAKFFTRLGQRLINALDQYTCDGFVYRTDMRLRPFGENGALALSFAAMELYYQEQGRDWERYAMIKGRILGANAQDPHVNTLQQLLRPFVYRRYIDFSVLQALRDMKHKIEREVRRRGLVDNIKLGAGGIREIEFIVQVFQLIRGGRESALQQPALLKVLPEISALELISAQQQEDLRQAYLFLRRTENILQAIHDQQTQQLPENTLDQQRLVLATQRFTQWDTQNKLETVTYPIHDWASFCEVLQQHQQNVRTVFDHLIGEEKEELSETETLWHDFLENEIEESEIEQMLIEHHIEERDFHEIIEKLMQFRNEVTRRPIGTRGRIALTQVMPTLLPQIFAHTAYLHLLPRMLNIVDKILTRTTYLELLVENPQALTQLIELCAQSRMIAEQVARHPILLDELLDRNALLNPPPYDHYASELRQYLLRLTPDDEEQMIDGLRQFKQATLLRIAAADILGALPVMKVSDHLTFLAEAIIHVVVELAWQQVTTRFGTPAHLAEGEKGFLVIGYGKLGGIELGYKSDLDLVFLYQSDEQSQTCGGKRSIESNQFYLRLAQKIISIFSINTFAGVLYEVDMRLRPSGESGLLCSSISAFKAYQLHDAWTWEKQALVRSRAIYGEARLQTEFNAIRAEVLSAPRDLATLQQDVVAMRQKMYAHLAHPDSDTFNIKTDRGGITDIEFIAQYLVLAHAPQNPALTRWSDNVRIFEIMAESAVISQEICDQLKQCYVDLRNRIHHLNLLGELSIVPQTEFQTERQFIQTIWHRLFEHNDKYEE.

The tract at residues 1-475 (MSFPLAHVDA…VFDHLIGEEK (475 aa)) is adenylyl removase. The segment at 481–986 (TETLWHDFLE…LFEHNDKYEE (506 aa)) is adenylyl transferase.

Belongs to the GlnE family. The cofactor is Mg(2+).

The catalysed reaction is [glutamine synthetase]-O(4)-(5'-adenylyl)-L-tyrosine + phosphate = [glutamine synthetase]-L-tyrosine + ADP. It carries out the reaction [glutamine synthetase]-L-tyrosine + ATP = [glutamine synthetase]-O(4)-(5'-adenylyl)-L-tyrosine + diphosphate. Its function is as follows. Involved in the regulation of glutamine synthetase GlnA, a key enzyme in the process to assimilate ammonia. When cellular nitrogen levels are high, the C-terminal adenylyl transferase (AT) inactivates GlnA by covalent transfer of an adenylyl group from ATP to specific tyrosine residue of GlnA, thus reducing its activity. Conversely, when nitrogen levels are low, the N-terminal adenylyl removase (AR) activates GlnA by removing the adenylyl group by phosphorolysis, increasing its activity. The regulatory region of GlnE binds the signal transduction protein PII (GlnB) which indicates the nitrogen status of the cell. This Pasteurella multocida (strain Pm70) protein is Bifunctional glutamine synthetase adenylyltransferase/adenylyl-removing enzyme.